We begin with the raw amino-acid sequence, 125 residues long: Small ribosomal subunit protein uS12 (125 aa).

The tract at residues 9 to 31 (RQGREVEKIKSKSPAMENSPQRR) is disordered. D89 is modified (3-methylthioaspartic acid). The tract at residues 105–125 (QGVKDRKQSRSKYGAKRPKAK) is disordered. Residues 113 to 125 (SRSKYGAKRPKAK) are compositionally biased toward basic residues.

The protein belongs to the universal ribosomal protein uS12 family. In terms of assembly, part of the 30S ribosomal subunit. Contacts proteins S8 and S17. May interact with IF1 in the 30S initiation complex.

In terms of biological role, with S4 and S5 plays an important role in translational accuracy. Functionally, interacts with and stabilizes bases of the 16S rRNA that are involved in tRNA selection in the A site and with the mRNA backbone. Located at the interface of the 30S and 50S subunits, it traverses the body of the 30S subunit contacting proteins on the other side and probably holding the rRNA structure together. The combined cluster of proteins S8, S12 and S17 appears to hold together the shoulder and platform of the 30S subunit. In Polaromonas naphthalenivorans (strain CJ2), this protein is Small ribosomal subunit protein uS12.